Reading from the N-terminus, the 324-residue chain is Endochitinase B (324 aa).

The signal sequence occupies residues 1–23 (MRLREFTALSSLLFSLLLLSASA). The region spanning 24 to 65 (EQCGSQAGGARCASGLCCSKFGWCGNTNDYCGPGNCQSQCPG) is the Chitin-binding type-1 domain. Cystine bridges form between Cys-26–Cys-41, Cys-35–Cys-47, Cys-40–Cys-54, and Cys-59–Cys-63. Residues Pro-67 and Pro-69 each carry the 4-hydroxyproline modification. Disulfide bonds link Cys-96/Cys-158, Cys-170/Cys-178, and Cys-277/Cys-309. The active-site Proton donor is the Glu-140. A propeptide spans 318–324 (GLLVDTM) (removed in mature form).

Belongs to the glycosyl hydrolase 19 family. Chitinase class I subfamily. The 4-hydroxyproline residues are not glycosylated in this plant vacuolar protein.

The protein localises to the vacuole. The catalysed reaction is Random endo-hydrolysis of N-acetyl-beta-D-glucosaminide (1-&gt;4)-beta-linkages in chitin and chitodextrins.. Defense against chitin-containing fungal pathogens. The polypeptide is Endochitinase B (CHN50) (Nicotiana tabacum (Common tobacco)).